The chain runs to 72 residues: Toxin Cll8 (72 aa).

Positions 1-4 are cleaved as a signal peptide; it reads TVSA. The region spanning 5-70 is the LCN-type CS-alpha/beta domain; the sequence is KEGYLVKKSN…TWPLPNKSCG (66 aa). 4 disulfide bridges follow: Cys16–Cys69, Cys20–Cys45, Cys29–Cys50, and Cys33–Cys52. A Cysteine amide modification is found at Cys69.

Belongs to the long (4 C-C) scorpion toxin superfamily. Sodium channel inhibitor family. Beta subfamily. In terms of tissue distribution, expressed by the venom gland.

It localises to the secreted. Beta toxins bind voltage-independently at site-4 of sodium channels (Nav) and shift the voltage of activation toward more negative potentials thereby affecting sodium channel activation and promoting spontaneous and repetitive firing. This is Toxin Cll8 from Centruroides limpidus (Mexican scorpion).